Here is a 666-residue protein sequence, read N- to C-terminus: tRNA 5-methylaminomethyl-2-thiouridine biosynthesis bifunctional protein MnmC (666 aa).

Residues 1–253 (MSSPFAPIIT…KRHMLCAYYE (253 aa)) are tRNA (mnm(5)s(2)U34)-methyltransferase. The FAD-dependent cmnm(5)s(2)U34 oxidoreductase stretch occupies residues 283 to 666 (VGGGLAGCFI…FLRKKIIQGP (384 aa)).

The protein in the N-terminal section; belongs to the methyltransferase superfamily. tRNA (mnm(5)s(2)U34)-methyltransferase family. This sequence in the C-terminal section; belongs to the DAO family. FAD is required as a cofactor.

Its subcellular location is the cytoplasm. The enzyme catalyses 5-aminomethyl-2-thiouridine(34) in tRNA + S-adenosyl-L-methionine = 5-methylaminomethyl-2-thiouridine(34) in tRNA + S-adenosyl-L-homocysteine + H(+). Catalyzes the last two steps in the biosynthesis of 5-methylaminomethyl-2-thiouridine (mnm(5)s(2)U) at the wobble position (U34) in tRNA. Catalyzes the FAD-dependent demodification of cmnm(5)s(2)U34 to nm(5)s(2)U34, followed by the transfer of a methyl group from S-adenosyl-L-methionine to nm(5)s(2)U34, to form mnm(5)s(2)U34. In Legionella pneumophila (strain Corby), this protein is tRNA 5-methylaminomethyl-2-thiouridine biosynthesis bifunctional protein MnmC.